We begin with the raw amino-acid sequence, 191 residues long: Adenylate cyclase CyaB (191 aa).

The region spanning 9-180 is the CYTH domain; the sequence is RFEVEFKYRL…TRSYRTLCEQ (172 aa). The active-site Proton acceptor is Y46.

This sequence belongs to the adenylyl cyclase CyaB family.

The protein localises to the cytoplasm. The enzyme catalyses ATP = 3',5'-cyclic AMP + diphosphate. With respect to regulation, inhibited by GTP. In vitro, CyaB catalyzes the biosynthesis of cyclic AMP (cAMP) from ATP. It seems that under the physiological conditions CyaB has no function in cAMP processes. In vitro, it is also able to hydrolyze substrates such as thiamine triphosphate (ThTP) and inorganic triphosphate (PPPi) at a low rate. It has a slight preference for ThTP over ATP and PPPi in the presence of manganese ions. This PPPase activity is probably not of physiological importance. The protein is Adenylate cyclase CyaB (cyaB) of Aeromonas hydrophila.